Here is a 253-residue protein sequence, read N- to C-terminus: Zinc finger protein GIS (253 aa).

Positions 1-10 (MDEATGETET) are enriched in acidic residues. The tract at residues 1–85 (MDEATGETET…GDNSTDNNSI (85 aa)) is disordered. 3 stretches are compositionally biased toward polar residues: residues 11 to 21 (QDFMNVESFSQ), 49 to 63 (SITT…PYQT), and 76 to 85 (GDNSTDNNSI). The C2H2-type zinc finger occupies 91–113 (FECHYCFRNFPTSQALGGHQNAH).

Expressed in inflorescence meristems, floral meristems and stem epidermis.

The protein localises to the nucleus. Probable transcription factor required for the initiation of inflorescence trichomes in response to gibberellin (GA). Mediates the induction of GL1 expression by GA in inflorescence organs and is antagonized in its action by the DELLA repressor GAI. Acts upstream of the trichome initiation regulators GL1 and GL3, and downstream of the GA signaling repressor SPINDLY (SPY). Does not play a significant role in the cytokinin response. Controls trichome branching through GA signaling. Acts downstream of the key regulator STICHEL (STI) in an endoreduplication-independent pathway. Controls trichome cell division indirectly by acting downstream of a key endoreduplication regulator SIAMESE (SIM). This Arabidopsis thaliana (Mouse-ear cress) protein is Zinc finger protein GIS (GIS).